A 444-amino-acid chain; its full sequence is Methylenetetrahydrofolate--tRNA-(uracil-5-)-methyltransferase TrmFO (444 aa).

An FAD-binding site is contributed by 10–15; the sequence is GAGLAG.

This sequence belongs to the MnmG family. TrmFO subfamily. The cofactor is FAD.

Its subcellular location is the cytoplasm. It carries out the reaction uridine(54) in tRNA + (6R)-5,10-methylene-5,6,7,8-tetrahydrofolate + NADH + H(+) = 5-methyluridine(54) in tRNA + (6S)-5,6,7,8-tetrahydrofolate + NAD(+). The catalysed reaction is uridine(54) in tRNA + (6R)-5,10-methylene-5,6,7,8-tetrahydrofolate + NADPH + H(+) = 5-methyluridine(54) in tRNA + (6S)-5,6,7,8-tetrahydrofolate + NADP(+). Its function is as follows. Catalyzes the folate-dependent formation of 5-methyl-uridine at position 54 (M-5-U54) in all tRNAs. In Streptococcus agalactiae serotype III (strain NEM316), this protein is Methylenetetrahydrofolate--tRNA-(uracil-5-)-methyltransferase TrmFO.